The primary structure comprises 463 residues: Chromosomal replication initiator protein DnaA (463 aa).

The segment at 1–83 (MSLTLWQQCL…LRFEVGSKPV (83 aa)) is domain I, interacts with DnaA modulators. The tract at residues 83–126 (VAQAISQPVMVSAHASAPGVVSRPAPTRPSWDNVPALAELSYRS) is domain II. The tract at residues 127 to 343 (NVNTKHNFDN…GALNRVIANA (217 aa)) is domain III, AAA+ region. Glycine 171, glycine 173, lysine 174, and threonine 175 together coordinate ATP. Residues 344-463 (NFTGRAITID…FSNLIRTLSS (120 aa)) form a domain IV, binds dsDNA region.

Belongs to the DnaA family. As to quaternary structure, oligomerizes as a right-handed, spiral filament on DNA at oriC.

It localises to the cytoplasm. In terms of biological role, plays an essential role in the initiation and regulation of chromosomal replication. ATP-DnaA binds to the origin of replication (oriC) to initiate formation of the DNA replication initiation complex once per cell cycle. Binds the DnaA box (a 9 base pair repeat at the origin) and separates the double-stranded (ds)DNA. Forms a right-handed helical filament on oriC DNA; dsDNA binds to the exterior of the filament while single-stranded (ss)DNA is stabiized in the filament's interior. The ATP-DnaA-oriC complex binds and stabilizes one strand of the AT-rich DNA unwinding element (DUE), permitting loading of DNA polymerase. After initiation quickly degrades to an ADP-DnaA complex that is not apt for DNA replication. Binds acidic phospholipids. This Erwinia tasmaniensis (strain DSM 17950 / CFBP 7177 / CIP 109463 / NCPPB 4357 / Et1/99) protein is Chromosomal replication initiator protein DnaA.